Consider the following 325-residue polypeptide: UPF0285 protein MA_3856 (325 aa).

This sequence belongs to the UPF0285 family.

The polypeptide is UPF0285 protein MA_3856 (Methanosarcina acetivorans (strain ATCC 35395 / DSM 2834 / JCM 12185 / C2A)).